A 439-amino-acid chain; its full sequence is Hemagglutinin-esterase (439 aa).

An N-terminal signal peptide occupies residues Met-1–Ala-22. The esterase domain 1 stretch occupies residues Thr-12–Ala-132. Topologically, residues Leu-23–Val-407 are virion surface. The active-site Nucleophile is the Ser-45. Residues Cys-49 and Cys-70 are joined by a disulfide bond. N-linked (GlcNAc...) asparagine; by host glycans are attached at residues Asn-94, Asn-152, Asn-196, Asn-246, and Asn-316. Cys-118 and Cys-167 are joined by a disulfide. The segment at Arg-133–Tyr-281 is receptor binding. Disulfide bonds link Cys-202-Cys-291 and Cys-210-Cys-264. The interval Leu-282–Phe-395 is esterase domain 2. Cys-322 and Cys-327 are oxidised to a cystine. 2 N-linked (GlcNAc...) asparagine; by host glycosylation sites follow: Asn-331 and Asn-337. Residues Asp-342 and His-345 each act as charge relay system in the active site. N-linked (GlcNAc...) asparagine; by host glycans are attached at residues Asn-360 and Asn-374. Cys-363 and Cys-387 are disulfide-bonded. Residues Ile-408–Phe-428 traverse the membrane as a helical segment. Residues Met-429–Ala-439 lie on the Intravirion side of the membrane.

Belongs to the influenza type C/coronaviruses hemagglutinin-esterase family. In terms of assembly, homodimer; disulfide-linked. Forms a complex with the M protein in the pre-Golgi. Associates then with S-M complex to form a ternary complex S-M-HE. Post-translationally, N-glycosylated in the host RER.

The protein resides in the virion membrane. It is found in the host cell membrane. The enzyme catalyses N-acetyl-9-O-acetylneuraminate + H2O = N-acetylneuraminate + acetate + H(+). It carries out the reaction N-acetyl-4-O-acetylneuraminate + H2O = N-acetylneuraminate + acetate + H(+). Structural protein that makes short spikes at the surface of the virus. Contains receptor binding and receptor-destroying activities. Mediates de-O-acetylation of N-acetyl-4-O-acetylneuraminic acid, which is probably the receptor determinant recognized by the virus on the surface of erythrocytes and susceptible cells. This receptor-destroying activity is important for virus release as it probably helps preventing self-aggregation and ensures the efficient spread of the progeny virus from cell to cell. May serve as a secondary viral attachment protein for initiating infection, the spike protein being the major one. May become a target for both the humoral and the cellular branches of the immune system. The polypeptide is Hemagglutinin-esterase (Puffinosis coronavirus (PV)).